The sequence spans 152 residues: MFRGASAINLDTKGRVAIPKRYREPLHVEYNSQLVITVDIQSACLLLYPLDEWSKIEAKLLLLSDTLPAERAMKRMLLGYAHECELDGNGRLLLPLPLRQYANLGKRAMLVGQLNKFELWDETAWQHQIEQSRETIQDEEFAENIRLADFSL.

SpoVT-AbrB domains are found at residues 5-52 and 81-124; these read ASAI…PLDE and AHEC…DETA.

The protein belongs to the MraZ family. Forms oligomers.

The protein resides in the cytoplasm. It is found in the nucleoid. This chain is Transcriptional regulator MraZ, found in Shewanella woodyi (strain ATCC 51908 / MS32).